The chain runs to 501 residues: Armadillo repeat-containing protein 6 (501 aa).

A Phosphoserine modification is found at Ser-64. 4 ARM repeats span residues 220–264 (GVLP…HAHN), 274–318 (KGLK…DLGG), 319–369 (LSIL…RAGG), and 370–412 (TESI…VEGG). Pros-methylhistidine is present on His-263.

This sequence belongs to the ARMC6 family. Post-translationally, methylated at His-263 by METTL9.

This is Armadillo repeat-containing protein 6 (ARMC6) from Pongo abelii (Sumatran orangutan).